A 410-amino-acid chain; its full sequence is Phosphoglycerate kinase (410 aa).

Substrate contacts are provided by residues 19–21 (DLN), Arg34, 57–60 (HQGK), Arg114, and Arg154. ATP contacts are provided by residues Glu332 and 358–361 (GGHS).

Belongs to the phosphoglycerate kinase family. In terms of assembly, homodimer.

It localises to the cytoplasm. The enzyme catalyses (2R)-3-phosphoglycerate + ATP = (2R)-3-phospho-glyceroyl phosphate + ADP. The protein operates within carbohydrate degradation; glycolysis; pyruvate from D-glyceraldehyde 3-phosphate: step 2/5. This is Phosphoglycerate kinase (pgk) from Pyrococcus furiosus (strain ATCC 43587 / DSM 3638 / JCM 8422 / Vc1).